A 348-amino-acid chain; its full sequence is MRSILVIPSFVAVLNAFSLFPKPHDDFKYLITFGDSYTDNGRLGYYGSHQAHGPPPGVMPPEANVTASGGLQWPQYVEASTGATLYDYAIAGATCDNNNVERWAAFMNANYPSIITDEIPSFKADRKTKLYRGVTSANTVYALWIGTNDLSYTGILSDSQVKGTNITTYIDCLWNVFDAIHAAGGRRFVILNNNALQLTGLYRPLSDGGAGDNQFWQNKTLYNQTEYAQKMLEYTTSSNTMIDYGVPFHLLVKNRWPGSKVAVYDIHSLIMDIYNQPSRYLEPPHNVVGYYKHCDVNGTNCLYGPGRLDSYLWYDELHPSNIIASYIAREFLNVVSGRSKYGTYWEHW.

An N-terminal signal peptide occupies residues 1-16; that stretch reads MRSILVIPSFVAVLNA. Residues Asn64, Asn165, Asn218, Asn223, and Asn297 are each glycosylated (N-linked (GlcNAc...) asparagine).

The protein belongs to the carbohydrate esterase CE16 family. In terms of processing, N-glycosylated.

It localises to the secreted. The catalysed reaction is an acetyl ester + H2O = an aliphatic alcohol + acetate + H(+). Functionally, acetylesterase that acts as an exo-deacetylase. Shows activity towards naphtyl acetate, triacetin, as well as towards glucose- and xylose acetates. Liberates acetic acid from xylo-oligomers. This chain is Acetylesterase, found in Hypocrea jecorina (Trichoderma reesei).